A 290-amino-acid polypeptide reads, in one-letter code: Cbb3-type cytochrome c oxidase subunit FixP (290 aa).

The Cytoplasmic portion of the chain corresponds to 1–32 (MTDHSEFDSVSGKTTTGHEWDGIKELNTPLPR). Residues 33-53 (WWVICFYLTIVWAIGYWIVYP) traverse the membrane as a helical segment. Over 54–290 (AWPLISSNTT…VYVHSLGGGK (237 aa)) the chain is Periplasmic. Cytochrome c domains are found at residues 109–198 (LARA…RSLS) and 206–287 (YDAA…HSLG). 8 residues coordinate heme c: C122, C125, H126, M173, C219, C222, H223, and M264.

Belongs to the CcoP / FixP family. Component of the cbb3-type cytochrome c oxidase at least composed of FixN, FixO, FixQ and FixP. Requires heme c as cofactor.

The protein localises to the cell inner membrane. It functions in the pathway energy metabolism; oxidative phosphorylation. In terms of biological role, C-type cytochrome. Part of the cbb3-type cytochrome c oxidase complex. FixP subunit is required for transferring electrons from donor cytochrome c via its heme groups to FixO subunit. From there, electrons are shuttled to the catalytic binuclear center of FixN subunit where oxygen reduction takes place. The complex also functions as a proton pump. The polypeptide is Cbb3-type cytochrome c oxidase subunit FixP (Bradyrhizobium diazoefficiens (strain JCM 10833 / BCRC 13528 / IAM 13628 / NBRC 14792 / USDA 110)).